A 356-amino-acid chain; its full sequence is MSYHRMTLSKFLLEQRKKGVIDPDLGSLINDIESACKYVAAAVSKGKLISQEVNVTINVQGEEQKPLDVIANEIFLKICEQGDQLQGMVSEEMESPYIIPPEHRRGKYLLIYDPLDGSSNLDVNLTVGSIFSVLKAPESGEPLEEKHFLRPGREQLAAGFTLYGPSVMFILTLGNGVHGFTLDREVGIFTLTHPDMRITPSTKEFAINASNERFWEPPVRRYVEECIKGKTGPRGKDFNMRWIASMVAEVYRILIRGGLFMYPRDTKDLSKPGRLRLLYEANPMGFIVEQAGGMISTGRESILDIVPRSLHQRIAVILGSKEEVELLNRYHNDYDSGKQEEFESPLFSTRSLFRNP.

Mg(2+) contacts are provided by Glu91, Asp113, Leu115, and Asp116. Substrate-binding positions include 116 to 119 (DGSS) and Asn208. Mg(2+) is bound at residue Glu280.

The protein belongs to the FBPase class 1 family. Homotetramer. Mg(2+) is required as a cofactor.

It is found in the cytoplasm. It carries out the reaction beta-D-fructose 1,6-bisphosphate + H2O = beta-D-fructose 6-phosphate + phosphate. It participates in carbohydrate biosynthesis; gluconeogenesis. The polypeptide is Fructose-1,6-bisphosphatase class 1 (Methylacidiphilum infernorum (isolate V4) (Methylokorus infernorum (strain V4))).